Here is a 352-residue protein sequence, read N- to C-terminus: Probable gamma-glutamyl hydrolase 3 (352 aa).

The N-terminal stretch at 1-19 (MWRFCFFLSLLFFDVSAVK) is a signal peptide. In terms of domain architecture, Gamma-glutamyl hydrolase spans 49–352 (AADPNLNYKP…SGDDEVYIFT (304 aa)). Cysteine 166 functions as the Nucleophile in the catalytic mechanism. The active site involves histidine 279.

It belongs to the peptidase C26 family.

The protein localises to the vacuole. It localises to the secreted. Its subcellular location is the extracellular space. It is found in the cell wall. The enzyme catalyses (6S)-5,6,7,8-tetrahydrofolyl-(gamma-L-Glu)(n) + (n-1) H2O = (6S)-5,6,7,8-tetrahydrofolate + (n-1) L-glutamate. In terms of biological role, cleaves the polyglutamate sidechains of folate polyglutamates in the vacuole. Is important for polyglutamyl tail length determination before vacuolar exit. Plays a role on folate stability and intracellular folate content. The chain is Probable gamma-glutamyl hydrolase 3 (GGH3) from Arabidopsis thaliana (Mouse-ear cress).